A 65-amino-acid polypeptide reads, in one-letter code: Large ribosomal subunit protein bL35 (65 aa).

It belongs to the bacterial ribosomal protein bL35 family.

The sequence is that of Large ribosomal subunit protein bL35 from Agathobacter rectalis (strain ATCC 33656 / DSM 3377 / JCM 17463 / KCTC 5835 / VPI 0990) (Eubacterium rectale).